Consider the following 374-residue polypeptide: Chaperone protein DnaJ (374 aa).

The J domain occupies 5 to 70 (DYYKLLGVDR…EKRAGYDRYG (66 aa)). The segment at 136–214 (GIQAPIHYVT…CNGSGRRRDE (79 aa)) adopts a CR-type zinc-finger fold. Residues Cys-149, Cys-152, Cys-166, Cys-169, Cys-188, Cys-191, Cys-202, and Cys-205 each contribute to the Zn(2+) site. CXXCXGXG motif repeat units follow at residues 149–156 (CDMCQGRG), 166–173 (CHTCQGSG), 188–195 (CTTCYGEG), and 202–209 (CKKCNGSG).

This sequence belongs to the DnaJ family. In terms of assembly, homodimer. It depends on Zn(2+) as a cofactor.

It localises to the cytoplasm. Its function is as follows. Participates actively in the response to hyperosmotic and heat shock by preventing the aggregation of stress-denatured proteins and by disaggregating proteins, also in an autonomous, DnaK-independent fashion. Unfolded proteins bind initially to DnaJ; upon interaction with the DnaJ-bound protein, DnaK hydrolyzes its bound ATP, resulting in the formation of a stable complex. GrpE releases ADP from DnaK; ATP binding to DnaK triggers the release of the substrate protein, thus completing the reaction cycle. Several rounds of ATP-dependent interactions between DnaJ, DnaK and GrpE are required for fully efficient folding. Also involved, together with DnaK and GrpE, in the DNA replication of plasmids through activation of initiation proteins. This chain is Chaperone protein DnaJ, found in Wolbachia sp. subsp. Brugia malayi (strain TRS).